Consider the following 1202-residue polypeptide: DNA polymerase beta (1202 aa).

3 tandem repeats follow at residues 1071–1074 (AGNP), 1075–1078 (AGNP), and 1079–1082 (AGNA). The 3 X 4 AA tandem repeats of A-G-[NK]-[PA] stretch occupies residues 1071–1082 (AGNPAGNPAGNA).

This sequence belongs to the DNA polymerase type-B family.

The enzyme catalyses DNA(n) + a 2'-deoxyribonucleoside 5'-triphosphate = DNA(n+1) + diphosphate. Its function is as follows. DNA-directed DNA polymerase involved in viral DNA replication. In Ornithodoros (relapsing fever ticks), this protein is DNA polymerase beta (DPOL).